A 342-amino-acid chain; its full sequence is S-adenosylmethionine:tRNA ribosyltransferase-isomerase (342 aa).

The protein belongs to the QueA family. As to quaternary structure, monomer.

The protein resides in the cytoplasm. It catalyses the reaction 7-aminomethyl-7-carbaguanosine(34) in tRNA + S-adenosyl-L-methionine = epoxyqueuosine(34) in tRNA + adenine + L-methionine + 2 H(+). It functions in the pathway tRNA modification; tRNA-queuosine biosynthesis. Transfers and isomerizes the ribose moiety from AdoMet to the 7-aminomethyl group of 7-deazaguanine (preQ1-tRNA) to give epoxyqueuosine (oQ-tRNA). The chain is S-adenosylmethionine:tRNA ribosyltransferase-isomerase from Streptococcus mutans serotype c (strain ATCC 700610 / UA159).